Here is a 480-residue protein sequence, read N- to C-terminus: Protein nucleotidyltransferase YdiU (480 aa).

Positions 86, 88, 89, 109, 121, 122, 172, and 179 each coordinate ATP. D248 acts as the Proton acceptor in catalysis. 2 residues coordinate Mg(2+): N249 and D258. D258 contributes to the ATP binding site.

It belongs to the SELO family. It depends on Mg(2+) as a cofactor. Mn(2+) is required as a cofactor.

It catalyses the reaction L-seryl-[protein] + ATP = 3-O-(5'-adenylyl)-L-seryl-[protein] + diphosphate. The catalysed reaction is L-threonyl-[protein] + ATP = 3-O-(5'-adenylyl)-L-threonyl-[protein] + diphosphate. It carries out the reaction L-tyrosyl-[protein] + ATP = O-(5'-adenylyl)-L-tyrosyl-[protein] + diphosphate. The enzyme catalyses L-histidyl-[protein] + UTP = N(tele)-(5'-uridylyl)-L-histidyl-[protein] + diphosphate. It catalyses the reaction L-seryl-[protein] + UTP = O-(5'-uridylyl)-L-seryl-[protein] + diphosphate. The catalysed reaction is L-tyrosyl-[protein] + UTP = O-(5'-uridylyl)-L-tyrosyl-[protein] + diphosphate. Its function is as follows. Nucleotidyltransferase involved in the post-translational modification of proteins. It can catalyze the addition of adenosine monophosphate (AMP) or uridine monophosphate (UMP) to a protein, resulting in modifications known as AMPylation and UMPylation. This Klebsiella pneumoniae (strain 342) protein is Protein nucleotidyltransferase YdiU.